The following is a 159-amino-acid chain: uncharacterized protein (159 aa).

3 helical membrane-spanning segments follow: residues 17 to 37 (FFFF…NLSS), 44 to 64 (WLIV…PLPI), and 67 to 87 (FSGA…DLIA).

It is found in the membrane. This is an uncharacterized protein from Saccharomyces cerevisiae (strain ATCC 204508 / S288c) (Baker's yeast).